Reading from the N-terminus, the 310-residue chain is MKKTLKRILFSSLSLSILLLLTGCVSVDKAGKPYGVIWNTLGVPMANLITYFAQHQGLGFGVAIIIVTIIVRVIILPLGLYQSWKASYQAEKMAYFKPLFEPINERLRNAKTQEEKLAAQTELMTAQRENGLSMFGGIGCLPLLIQMPFFSAIFFAARYTPGVSSATFLGLNLGQKSLTLTVIIAILYFVQSWLSMQGVPDEQRQQMKTMMYVMPIAMVFMSISLPASVALYWFIGGIFSIIQQLVTTYVLKPKLRRKVEEEYTKNPPKAYKSNNARKDVTSSTKTTESNQAIITSKKTNRNAGKQKRRG.

The N-terminal stretch at 1-23 is a signal peptide; sequence MKKTLKRILFSSLSLSILLLLTG. Residue C24 is the site of N-palmitoyl cysteine attachment. The S-diacylglycerol cysteine moiety is linked to residue C24. Helical transmembrane passes span 33–53, 58–78, 135–155, 180–200, and 219–239; these read PYGVIWNTLGVPMANLITYFA, LGFGVAIIIVTIIVRVIILPL, FGGIGCLPLLIQMPFFSAIFF, LTVIIAILYFVQSWLSMQGVP, and VFMSISLPASVALYWFIGGIF. The disordered stretch occupies residues 262-310; it reads EYTKNPPKAYKSNNARKDVTSSTKTTESNQAIITSKKTNRNAGKQKRRG. The segment covering 281–297 has biased composition (polar residues); sequence TSSTKTTESNQAIITSK. The span at 298-310 shows a compositional bias: basic residues; the sequence is KTNRNAGKQKRRG.

Belongs to the OXA1/ALB3/YidC family. Type 2 subfamily.

It localises to the cell membrane. In terms of biological role, required for the insertion and/or proper folding and/or complex formation of integral membrane proteins into the membrane. Involved in integration of membrane proteins that insert both dependently and independently of the Sec translocase complex, as well as at least some lipoproteins. The polypeptide is Membrane protein insertase YidC 2 (Streptococcus agalactiae serotype III (strain NEM316)).